Here is a 348-residue protein sequence, read N- to C-terminus: Ketol-acid reductoisomerase (NADP(+)) (348 aa).

Residues 2-182 form the KARI N-terminal Rossmann domain; sequence AKTYYDHDAD…GCTRAGVLET (181 aa). Residues 25–28, S51, S53, and 83–86 each bind NADP(+); these read YGSQ and DTAQ. The active site involves H108. NADP(+) is bound at residue G134. The KARI C-terminal knotted domain occupies 183–328; it reads TFKEETETDL…EKLRAAMPFL (146 aa). Mg(2+) contacts are provided by D191, E195, E227, and E231. A substrate-binding site is contributed by S252.

Belongs to the ketol-acid reductoisomerase family. Requires Mg(2+) as cofactor.

It catalyses the reaction (2R)-2,3-dihydroxy-3-methylbutanoate + NADP(+) = (2S)-2-acetolactate + NADPH + H(+). The enzyme catalyses (2R,3R)-2,3-dihydroxy-3-methylpentanoate + NADP(+) = (S)-2-ethyl-2-hydroxy-3-oxobutanoate + NADPH + H(+). It functions in the pathway amino-acid biosynthesis; L-isoleucine biosynthesis; L-isoleucine from 2-oxobutanoate: step 2/4. The protein operates within amino-acid biosynthesis; L-valine biosynthesis; L-valine from pyruvate: step 2/4. Its function is as follows. Involved in the biosynthesis of branched-chain amino acids (BCAA). Catalyzes an alkyl-migration followed by a ketol-acid reduction of (S)-2-acetolactate (S2AL) to yield (R)-2,3-dihydroxy-isovalerate. In the isomerase reaction, S2AL is rearranged via a Mg-dependent methyl migration to produce 3-hydroxy-3-methyl-2-ketobutyrate (HMKB). In the reductase reaction, this 2-ketoacid undergoes a metal-dependent reduction by NADPH to yield (R)-2,3-dihydroxy-isovalerate. This Acidobacterium capsulatum (strain ATCC 51196 / DSM 11244 / BCRC 80197 / JCM 7670 / NBRC 15755 / NCIMB 13165 / 161) protein is Ketol-acid reductoisomerase (NADP(+)).